Consider the following 145-residue polypeptide: D-aminoacyl-tRNA deacylase (145 aa).

A Gly-cisPro motif, important for rejection of L-amino acids motif is present at residues 137–138; it reads GP.

This sequence belongs to the DTD family. In terms of assembly, homodimer.

The protein resides in the cytoplasm. The catalysed reaction is glycyl-tRNA(Ala) + H2O = tRNA(Ala) + glycine + H(+). It carries out the reaction a D-aminoacyl-tRNA + H2O = a tRNA + a D-alpha-amino acid + H(+). An aminoacyl-tRNA editing enzyme that deacylates mischarged D-aminoacyl-tRNAs. Also deacylates mischarged glycyl-tRNA(Ala), protecting cells against glycine mischarging by AlaRS. Acts via tRNA-based rather than protein-based catalysis; rejects L-amino acids rather than detecting D-amino acids in the active site. By recycling D-aminoacyl-tRNA to D-amino acids and free tRNA molecules, this enzyme counteracts the toxicity associated with the formation of D-aminoacyl-tRNA entities in vivo and helps enforce protein L-homochirality. The chain is D-aminoacyl-tRNA deacylase from Escherichia coli O7:K1 (strain IAI39 / ExPEC).